A 44-amino-acid chain; its full sequence is uncharacterized protein (44 aa).

A helical membrane pass occupies residues 19-39 (AVGFVVSFGFFAFLFVMATVI).

It localises to the cell membrane. This is an uncharacterized protein from Bacillus subtilis (strain 168).